The sequence spans 83 residues: MSSGGLLLLLGLLTLWAELTPVSSKDRPEFCELPPDRGTCMGYSQAFYYNPSQNKCLPFMFGGCKANPNNFKTLEECKRTCAA.

Positions 1 to 24 are cleaved as a signal peptide; sequence MSSGGLLLLLGLLTLWAELTPVSS. The 51-residue stretch at 31–81 folds into the BPTI/Kunitz inhibitor domain; that stretch reads CELPPDRGTCMGYSQAFYYNPSQNKCLPFMFGGCKANPNNFKTLEECKRTC. 3 disulfide bridges follow: Cys31-Cys81, Cys40-Cys64, and Cys56-Cys77.

The protein belongs to the venom Kunitz-type family. As to expression, expressed by the venom gland.

It localises to the secreted. In terms of biological role, serine protease inhibitor. This Demansia vestigiata (Lesser black whip snake) protein is Kunitz-type serine protease inhibitor vestiginin-2.